The following is a 258-amino-acid chain: D-aminoacyl-tRNA deacylase (258 aa).

It belongs to the DtdA deacylase family. Monomer. The cofactor is Zn(2+).

It carries out the reaction a D-aminoacyl-tRNA + H2O = a tRNA + a D-alpha-amino acid + H(+). The catalysed reaction is glycyl-tRNA(Ala) + H2O = tRNA(Ala) + glycine + H(+). D-aminoacyl-tRNA deacylase with broad substrate specificity. By recycling D-aminoacyl-tRNA to D-amino acids and free tRNA molecules, this enzyme counteracts the toxicity associated with the formation of D-aminoacyl-tRNA entities in vivo. The protein is D-aminoacyl-tRNA deacylase of Cenarchaeum symbiosum (strain A).